The chain runs to 683 residues: Protein zntD (683 aa).

Transmembrane regions (helical) follow at residues 12 to 32, 42 to 62, and 79 to 99; these read IIST…PYWM, LSWS…LHLF, and PFAA…ELII. Over residues 120 to 129 the composition is skewed to basic residues; it reads VHLSHGHSHH. Disordered stretches follow at residues 120–180, 299–325, 364–390, and 451–489; these read VHLS…TTTT, GFSN…NNNN, CSND…TPNT, and IGNS…NNNN. Gly residues predominate over residues 137–149; the sequence is GNPGSGVGIGMGS. Composition is skewed to low complexity over residues 160 to 180 and 302 to 325; these read TTSP…TTTT and NNNN…NNNN. Residues 451 to 465 show a composition bias toward low complexity; it reads IGNSGNIGSNNNNNN. The segment covering 466–475 has biased composition (gly residues); it reads NGGGGGGGGN. Positions 476 to 489 are enriched in low complexity; sequence SNIDYNDNEENNNN. 5 helical membrane-spanning segments follow: residues 534-554, 564-584, 600-620, 631-651, and 662-682; these read ILLP…EGLA, VFDI…ALGI, FLLV…GMVI, PPIL…VEII, and ILIK…VAIW.

This sequence belongs to the ZIP transporter (TC 2.A.5) family.

The protein localises to the membrane. In terms of biological role, may transport divalent cations. May participate, with dstA, in the regulation of the differentiation of stalk cells during development. This chain is Protein zntD (zntD), found in Dictyostelium discoideum (Social amoeba).